The following is a 109-amino-acid chain: Class I hydrophobin 18 (109 aa).

The N-terminal stretch at 1-20 is a signal peptide; the sequence is MFTEQVLNVIILLQTATVTA. Intrachain disulfides connect C28/C88, C35/C82, C36/C69, and C89/C102. 2 N-linked (GlcNAc...) asparagine glycosylation sites follow: N91 and N106.

It belongs to the fungal hydrophobin family. In terms of assembly, self-assembles to form functional amyloid fibrils called rodlets. Self-assembly into fibrillar rodlets occurs spontaneously at hydrophobic:hydrophilic interfaces and the rodlets further associate laterally to form amphipathic monolayers.

Its subcellular location is the secreted. It localises to the cell wall. Aerial growth, conidiation, and dispersal of filamentous fungi in the environment rely upon a capability of their secreting small amphipathic proteins called hydrophobins (HPBs) with low sequence identity. Class I can self-assemble into an outermost layer of rodlet bundles on aerial cell surfaces, conferring cellular hydrophobicity that supports fungal growth, development and dispersal; whereas Class II form highly ordered films at water-air interfaces through intermolecular interactions but contribute nothing to the rodlet structure. In Pleurotus ostreatus (strain PC15) (Oyster mushroom), this protein is Class I hydrophobin 18.